A 239-amino-acid chain; its full sequence is Cysteine-rich venom protein (239 aa).

The signal sequence occupies residues 1-18; that stretch reads MIVFILLSLAAVLQQSVA. The SCP domain maps to 37-165; it reads VDMHNSFRRS…PYNYFYVCQY (129 aa). Disulfide bonds link C74/C152, C91/C166, C147/C163, C185/C192, C188/C197, C210/C228, and C219/C232. Residues 201-234 form the ShKT domain; it reads CPINNVFTNCDSLLQQSSCEDSYITTNCGASCFC.

It belongs to the CRISP family. In terms of tissue distribution, expressed by the venom gland.

The protein localises to the secreted. Blocks contraction of smooth muscle elicited by high potassium-induced depolarization, but does not block caffeine-stimulated contraction. May target voltage-gated calcium channels on smooth muscle. This Cerberus rynchops (Dog-faced water snake) protein is Cysteine-rich venom protein.